The primary structure comprises 2701 residues: Centromere-associated protein E (2701 aa).

The 324-residue stretch at 6–329 (AVAVCVRVRP…LQFASTAKYM (324 aa)) folds into the Kinesin motor domain. 86–93 (GQTASGKT) provides a ligand contact to ATP. Residues 336–2590 (NEVSTDEALL…SNEVKTWKER (2255 aa)) adopt a coiled-coil conformation. 2 positions are modified to phosphoserine: S611 and S2083. Positions 2126-2476 (KEIEFQKELS…IDLEKMKNAK (351 aa)) are kinetochore-binding domain. Positions 2355–2376 (SGAQVNPTTQDNKNPHVTSRAT) are disordered. Residue S2389 is modified to Phosphoserine. Positions 2508–2527 (QAQDTSVISEHTDPQPSNKP) are enriched in polar residues. Disordered regions lie at residues 2508–2533 (QAQD…CGGG) and 2588–2701 (KERT…CKTQ). Positions 2510–2698 (QDTSVISEHT…ASSGKDVPEC (189 aa)) are globular autoinhibitory domain. A compositionally biased stretch (basic and acidic residues) spans 2588–2600 (KERTLKREAHKQV). The span at 2601 to 2625 (TCENSPKSPKVTGTASKKKQITPSQ) shows a compositional bias: polar residues. Basic and acidic residues predominate over residues 2626-2640 (CKERNLQDPVPKESP). A phosphoserine mark is found at S2639, S2647, and S2651. C2698 carries the cysteine methyl ester modification. The S-farnesyl cysteine moiety is linked to residue C2698. Residues 2699–2701 (KTQ) constitute a propeptide, removed in mature form.

The protein belongs to the TRAFAC class myosin-kinesin ATPase superfamily. Kinesin family. Monomer. Interacts with CENPF. Interacts with BUB1B. Interacts with SEPT7. Interacts with KIF18A. Interacts with PRC1. Interacts with NUF2; this interaction determines kinetochore localization. Interacts with SKAP; this interaction greatly favors SKAP binding to microtubules. Interacts with TRAPPC12. Interacts with CTCF. The C-terminal inhibitory domain is phosphorylated. Phosphorylation relieves autoinhibition of the kinetochore motor. Post-translationally, sumoylated with SUMO2 and SUMO3. The sumoylation mediates the association to the kinetochore.

The protein localises to the chromosome. Its subcellular location is the centromere. The protein resides in the kinetochore. It is found in the cytoplasm. It localises to the cytoskeleton. The protein localises to the spindle. Functionally, microtubule plus-end-directed kinetochore motor which plays an important role in chromosome congression, microtubule-kinetochore conjugation and spindle assembly checkpoint activation. Drives chromosome congression (alignment of chromosomes at the spindle equator resulting in the formation of the metaphase plate) by mediating the lateral sliding of polar chromosomes along spindle microtubules towards the spindle equator and by aiding the establishment and maintenance of connections between kinetochores and spindle microtubules. The transport of pole-proximal chromosomes towards the spindle equator is favored by microtubule tracks that are detyrosinated. Acts as a processive bi-directional tracker of dynamic microtubule tips; after chromosomes have congressed, continues to play an active role at kinetochores, enhancing their links with dynamic microtubule ends. Suppresses chromosome congression in NDC80-depleted cells and contributes positively to congression only when microtubules are stabilized. Plays an important role in the formation of stable attachments between kinetochores and spindle microtubules The stabilization of kinetochore-microtubule attachment also requires CENPE-dependent localization of other proteins to the kinetochore including BUB1B, MAD1 and MAD2. Plays a role in spindle assembly checkpoint activation (SAC) via its interaction with BUB1B resulting in the activation of its kinase activity, which is important for activating SAC. Necessary for the mitotic checkpoint signal at individual kinetochores to prevent aneuploidy due to single chromosome loss. The protein is Centromere-associated protein E (CENPE) of Homo sapiens (Human).